Here is a 311-residue protein sequence, read N- to C-terminus: Acetyl-coenzyme A carboxylase carboxyl transferase subunit alpha (311 aa).

Residues 36–286 enclose the CoA carboxyltransferase C-terminal domain; that stretch reads NLSKEISKVY…ANYFISELAE (251 aa).

This sequence belongs to the AccA family. Acetyl-CoA carboxylase is a heterohexamer composed of biotin carboxyl carrier protein (AccB), biotin carboxylase (AccC) and two subunits each of ACCase subunit alpha (AccA) and ACCase subunit beta (AccD).

Its subcellular location is the cytoplasm. It catalyses the reaction N(6)-carboxybiotinyl-L-lysyl-[protein] + acetyl-CoA = N(6)-biotinyl-L-lysyl-[protein] + malonyl-CoA. Its pathway is lipid metabolism; malonyl-CoA biosynthesis; malonyl-CoA from acetyl-CoA: step 1/1. Functionally, component of the acetyl coenzyme A carboxylase (ACC) complex. First, biotin carboxylase catalyzes the carboxylation of biotin on its carrier protein (BCCP) and then the CO(2) group is transferred by the carboxyltransferase to acetyl-CoA to form malonyl-CoA. The protein is Acetyl-coenzyme A carboxylase carboxyl transferase subunit alpha of Campylobacter concisus (strain 13826).